A 42-amino-acid chain; its full sequence is Small protein MntS (42 aa).

It is found in the cytoplasm. Its function is as follows. Required for repression of mntH by MntR. May function as a chaperone that makes manganese more available by delivering it to the necessary cellular locations when manganese is limiting. The polypeptide is Small protein MntS (mntS) (Escherichia coli (strain K12)).